The following is a 386-amino-acid chain: Diaminopimelate decarboxylase (386 aa).

Residue K49 is modified to N6-(pyridoxal phosphate)lysine. Residues G228 and 266 to 269 (ELGR) each bind pyridoxal 5'-phosphate. Substrate-binding residues include R269, R305, Y309, E335, and Y363. Residue Y363 participates in pyridoxal 5'-phosphate binding.

This sequence belongs to the Orn/Lys/Arg decarboxylase class-II family. LysA subfamily. As to quaternary structure, homodimer. The cofactor is pyridoxal 5'-phosphate.

It catalyses the reaction meso-2,6-diaminopimelate + H(+) = L-lysine + CO2. It functions in the pathway amino-acid biosynthesis; L-lysine biosynthesis via DAP pathway; L-lysine from DL-2,6-diaminopimelate: step 1/1. In terms of biological role, specifically catalyzes the decarboxylation of meso-diaminopimelate (meso-DAP) to L-lysine. The sequence is that of Diaminopimelate decarboxylase from Bacteroides thetaiotaomicron (strain ATCC 29148 / DSM 2079 / JCM 5827 / CCUG 10774 / NCTC 10582 / VPI-5482 / E50).